The sequence spans 393 residues: Protein TsgA (393 aa).

The next 12 membrane-spanning stretches (helical) occupy residues 11–31 (WISF…GMVM), 51–71 (FLNA…EIVP), 78–98 (FGFI…SLAL), 101–121 (AAMF…TFLI), 134–154 (LLFT…VAAF), 162–182 (WYWV…LTFG), 206–226 (IGVL…LGFI), 245–265 (ALVS…SFIL), 273–293 (ILTV…TGTQ), 298–318 (WFIL…ITLG), 332–352 (FILT…GPIV), and 361–381 (LLTA…LGFV).

This sequence belongs to the major facilitator superfamily. TsgA family.

Its subcellular location is the cell inner membrane. This chain is Protein TsgA, found in Salmonella arizonae (strain ATCC BAA-731 / CDC346-86 / RSK2980).